Reading from the N-terminus, the 231-residue chain is 2-C-methyl-D-erythritol 4-phosphate cytidylyltransferase (231 aa).

It belongs to the IspD/TarI cytidylyltransferase family. IspD subfamily.

The enzyme catalyses 2-C-methyl-D-erythritol 4-phosphate + CTP + H(+) = 4-CDP-2-C-methyl-D-erythritol + diphosphate. It participates in isoprenoid biosynthesis; isopentenyl diphosphate biosynthesis via DXP pathway; isopentenyl diphosphate from 1-deoxy-D-xylulose 5-phosphate: step 2/6. Functionally, catalyzes the formation of 4-diphosphocytidyl-2-C-methyl-D-erythritol from CTP and 2-C-methyl-D-erythritol 4-phosphate (MEP). The polypeptide is 2-C-methyl-D-erythritol 4-phosphate cytidylyltransferase (Fusobacterium nucleatum subsp. nucleatum (strain ATCC 25586 / DSM 15643 / BCRC 10681 / CIP 101130 / JCM 8532 / KCTC 2640 / LMG 13131 / VPI 4355)).